The sequence spans 146 residues: MVKKVLLINGPNLNLLGTREPEKYGTTSLSDIEQAAIEQAKLKKNDSEVLTFQSNTEGFIIDRIHEAKRQGVGFVVINAGAYTHTSVGIRDALLGTAIPFIEVHITNVHQREPFRHQSYLSDKAVAVICGLGVYGYTAAIEYALNY.

Residue tyrosine 24 is the Proton acceptor of the active site. Substrate is bound by residues asparagine 78, histidine 84, and aspartate 91. Histidine 104 (proton donor) is an active-site residue. Residues isoleucine 105–threonine 106 and arginine 115 contribute to the substrate site.

The protein belongs to the type-II 3-dehydroquinase family. In terms of assembly, homododecamer. Adopts a ring-like structure, composed of an arrangement of two hexameric rings stacked on top of one another.

The enzyme catalyses 3-dehydroquinate = 3-dehydroshikimate + H2O. The protein operates within aromatic compound metabolism; 3,4-dihydroxybenzoate biosynthesis; 3,4-dihydroxybenzoate from 3-dehydroquinate: step 1/2. Functionally, is involved in the catabolism of quinate. Allows the utilization of quinate as carbon source via the beta-ketoadipate pathway. In Candida dubliniensis (strain CD36 / ATCC MYA-646 / CBS 7987 / NCPF 3949 / NRRL Y-17841) (Yeast), this protein is Catabolic 3-dehydroquinase.